The chain runs to 95 residues: Protein RnfH (95 aa).

This sequence belongs to the UPF0125 (RnfH) family.

The protein is Protein RnfH of Erwinia tasmaniensis (strain DSM 17950 / CFBP 7177 / CIP 109463 / NCPPB 4357 / Et1/99).